The following is a 262-amino-acid chain: Acyl-[acyl-carrier-protein]--UDP-N-acetylglucosamine O-acyltransferase (262 aa).

The protein belongs to the transferase hexapeptide repeat family. LpxA subfamily. In terms of assembly, homotrimer.

The protein localises to the cytoplasm. The enzyme catalyses a (3R)-hydroxyacyl-[ACP] + UDP-N-acetyl-alpha-D-glucosamine = a UDP-3-O-[(3R)-3-hydroxyacyl]-N-acetyl-alpha-D-glucosamine + holo-[ACP]. It functions in the pathway glycolipid biosynthesis; lipid IV(A) biosynthesis; lipid IV(A) from (3R)-3-hydroxytetradecanoyl-[acyl-carrier-protein] and UDP-N-acetyl-alpha-D-glucosamine: step 1/6. Its function is as follows. Involved in the biosynthesis of lipid A, a phosphorylated glycolipid that anchors the lipopolysaccharide to the outer membrane of the cell. The chain is Acyl-[acyl-carrier-protein]--UDP-N-acetylglucosamine O-acyltransferase from Klebsiella pneumoniae (strain 342).